Consider the following 22-residue polypeptide: Unknown protein from spot 168 of 2D-PAGE of etiolated coleoptile (22 aa).

The sequence is that of Unknown protein from spot 168 of 2D-PAGE of etiolated coleoptile from Zea mays (Maize).